Here is a 114-residue protein sequence, read N- to C-terminus: Amphinase-4 (114 aa).

Catalysis depends on His-15, which acts as the Proton acceptor. Cystine bridges form between Cys-26-Cys-79, Cys-41-Cys-85, Cys-59-Cys-100, and Cys-97-Cys-114. An N-linked (GlcNAc...) asparagine glycan is attached at Asn-27. 42-46 is a substrate binding site; the sequence is KPVNT. N-linked (GlcNAc...) asparagine glycans are attached at residues Asn-67 and Asn-91. The Proton donor role is filled by His-107.

It belongs to the pancreatic ribonuclease family. As to quaternary structure, monomer. In terms of processing, there are at least five different forms arising from glycan heterogeneity.

Its subcellular location is the secreted. Its function is as follows. Endonuclease, hydrolyzes highly polymerized RNA, poly(U) and poly(C), and the dinucleotides CpA and UpA. Hydrolyzes rCA, rUA and rUG. Has cytotoxic activity against cultured human submaxillary gland carcinoma cells. The sequence is that of Amphinase-4 from Lithobates pipiens (Northern leopard frog).